The following is a 479-amino-acid chain: Aspartyl/glutamyl-tRNA(Asn/Gln) amidotransferase subunit B (479 aa).

It belongs to the GatB/GatE family. GatB subfamily. In terms of assembly, heterotrimer of A, B and C subunits.

It carries out the reaction L-glutamyl-tRNA(Gln) + L-glutamine + ATP + H2O = L-glutaminyl-tRNA(Gln) + L-glutamate + ADP + phosphate + H(+). The catalysed reaction is L-aspartyl-tRNA(Asn) + L-glutamine + ATP + H2O = L-asparaginyl-tRNA(Asn) + L-glutamate + ADP + phosphate + 2 H(+). Functionally, allows the formation of correctly charged Asn-tRNA(Asn) or Gln-tRNA(Gln) through the transamidation of misacylated Asp-tRNA(Asn) or Glu-tRNA(Gln) in organisms which lack either or both of asparaginyl-tRNA or glutaminyl-tRNA synthetases. The reaction takes place in the presence of glutamine and ATP through an activated phospho-Asp-tRNA(Asn) or phospho-Glu-tRNA(Gln). This Streptococcus pyogenes serotype M4 (strain MGAS10750) protein is Aspartyl/glutamyl-tRNA(Asn/Gln) amidotransferase subunit B.